A 265-amino-acid chain; its full sequence is Pre-mRNA-splicing factor cwf15 (265 aa).

Disordered regions lie at residues 1 to 31 (MTTA…ALPA) and 62 to 197 (AAHF…ALEQ). Positions 113–125 (EADEDASDSDDSV) are enriched in acidic residues. Over residues 143 to 155 (SNSQESVDSSNSE) the composition is skewed to low complexity. The stretch at 155-205 (ESSDEESDSEDETQQLLRELENIKQERKREQMLQEEKNRALEQEKREREIA) forms a coiled coil. The segment covering 156 to 167 (SSDEESDSEDET) has biased composition (acidic residues). Positions 172 to 197 (RELENIKQERKREQMLQEEKNRALEQ) are enriched in basic and acidic residues.

It belongs to the CWC15 family. Belongs to the 40S cdc5-associated complex (or cwf complex), a spliceosome sub-complex reminiscent of a late-stage spliceosome composed of the U2, U5 and U6 snRNAs and at least brr2, cdc5, cwf2/prp3, cwf3/syf1, cwf4/syf3, cwf5/ecm2, spp42/cwf6, cwf7/spf27, cwf8, cwf9, cwf10, cwf11, cwf12, prp45/cwf13, cwf14, cwf15, cwf16, cwf17, cwf18, cwf19, cwf20, cwf21, cwf22, cwf23, cwf24, cwf25, cwf26, cyp7/cwf27, cwf28, cwf29/ist3, lea1, msl1, prp5/cwf1, prp10, prp12/sap130, prp17, prp22, sap61, sap62, sap114, sap145, slu7, smb1, smd1, smd3, smf1, smg1 and syf2.

It localises to the nucleus. Its function is as follows. Involved in pre-mRNA splicing. The sequence is that of Pre-mRNA-splicing factor cwf15 (cwf15) from Schizosaccharomyces pombe (strain 972 / ATCC 24843) (Fission yeast).